We begin with the raw amino-acid sequence, 520 residues long: Sensory neuron membrane protein 1 (520 aa).

Residues 1 to 5 (MKPKK) are Cytoplasmic-facing. Residues 6–26 (LGIIGGSLLAFGILICAIAFP) traverse the membrane as a helical segment. At 27–451 (PFLRSQVKKQ…KLKTVFKTIS (425 aa)) the chain is on the extracellular side. Asn64, Asn224, and Asn268 each carry an N-linked (GlcNAc...) asparagine glycan. 3 disulfide bridges follow: Cys264-Cys329, Cys293-Cys348, and Cys331-Cys337. Residues 452–472 (IVGFMKWFTIVSGTCVSGAAA) traverse the membrane as a helical segment. Over 473–520 (ALFFKNKDKNKLDITKVTPQKGEEKKWPNQMTISTIQSAAVPPNLDAD) the chain is Cytoplasmic.

It belongs to the CD36 family.

Its subcellular location is the cell membrane. Plays an olfactory role that is not restricted to pheromone sensitivity. This Apis mellifera (Honeybee) protein is Sensory neuron membrane protein 1.